A 224-amino-acid polypeptide reads, in one-letter code: Envelope glycoprotein L (224 aa).

The N-terminal stretch at 1–22 (MGILGWVGLIAVGVLCVRGGLS) is a signal peptide. Positions 20-161 (GLSSTEYVIR…FDYSRTRRCV (142 aa)) are interaction with gH. The segment at 20–161 (GLSSTEYVIR…FDYSRTRRCV (142 aa)) is interaction with gL. Positions 23–201 (STEYVIRSRV…LTTPPPIIAT (179 aa)) constitute a gL alphaherpesvirus-type domain. 2 cysteine pairs are disulfide-bonded: C44-C76 and C149-C160. The disordered stretch occupies residues 161–224 (VGRQDLGPTN…RRRRPHSRRL (64 aa)). N170 is a glycosylation site (N-linked (GlcNAc...) asparagine; by host). Over residues 213-224 (KSRRRRPHSRRL) the composition is skewed to basic residues.

It belongs to the herpesviridae glycoprotein L (gL) family. Alphaherpesvirinae gL subfamily. In terms of assembly, interacts with glycoprotein H (gH); this interaction is necessary for the correct processing and cell surface expression of gH. The heterodimer gH/gL seems to interact with gB trimers during fusion. In terms of processing, N-glycosylated, O-glycosylated, and sialylated.

The protein localises to the virion membrane. It is found in the host cell membrane. Its subcellular location is the host Golgi apparatus. The protein resides in the host trans-Golgi network. The heterodimer glycoprotein H-glycoprotein L is required for the fusion of viral and plasma membranes leading to virus entry into the host cell. Acts as a functional inhibitor of gH and maintains gH in an inhibited form. Upon binding to host integrins, gL dissociates from gH leading to activation of the viral fusion glycoproteins gB and gH. The chain is Envelope glycoprotein L from Human herpesvirus 1 (strain KOS) (HHV-1).